A 200-amino-acid polypeptide reads, in one-letter code: Recombination protein RecR (200 aa).

The C4-type zinc finger occupies 58–73 (CQKCHNISDTTLCSIC). Positions 81–176 (GLICVVENIQ…KLSNIARGVA (96 aa)) constitute a Toprim domain.

The protein belongs to the RecR family.

In terms of biological role, may play a role in DNA repair. It seems to be involved in an RecBC-independent recombinational process of DNA repair. It may act with RecF and RecO. The sequence is that of Recombination protein RecR from Amoebophilus asiaticus (strain 5a2).